The chain runs to 372 residues: Dual-specificity RNA methyltransferase RlmN (372 aa).

Catalysis depends on E93, which acts as the Proton acceptor. The region spanning 99 to 338 (EKDRATLCIS…VTVRKTRGDD (240 aa)) is the Radical SAM core domain. The cysteines at positions 106 and 343 are disulfide-linked. The [4Fe-4S] cluster site is built by C113, C117, and C120. Residues 167 to 168 (GE), S199, 221 to 223 (SLH), and N300 contribute to the S-adenosyl-L-methionine site. C343 functions as the S-methylcysteine intermediate in the catalytic mechanism.

This sequence belongs to the radical SAM superfamily. RlmN family. The cofactor is [4Fe-4S] cluster.

The protein localises to the cytoplasm. It carries out the reaction adenosine(2503) in 23S rRNA + 2 reduced [2Fe-2S]-[ferredoxin] + 2 S-adenosyl-L-methionine = 2-methyladenosine(2503) in 23S rRNA + 5'-deoxyadenosine + L-methionine + 2 oxidized [2Fe-2S]-[ferredoxin] + S-adenosyl-L-homocysteine. The catalysed reaction is adenosine(37) in tRNA + 2 reduced [2Fe-2S]-[ferredoxin] + 2 S-adenosyl-L-methionine = 2-methyladenosine(37) in tRNA + 5'-deoxyadenosine + L-methionine + 2 oxidized [2Fe-2S]-[ferredoxin] + S-adenosyl-L-homocysteine. Its function is as follows. Specifically methylates position 2 of adenine 2503 in 23S rRNA and position 2 of adenine 37 in tRNAs. m2A2503 modification seems to play a crucial role in the proofreading step occurring at the peptidyl transferase center and thus would serve to optimize ribosomal fidelity. This is Dual-specificity RNA methyltransferase RlmN from Psychromonas ingrahamii (strain DSM 17664 / CCUG 51855 / 37).